We begin with the raw amino-acid sequence, 364 residues long: MSTHRNQRVIVGISGGVDSSVSAYLLKALGYEVEGLFMKNWDEDDGTEYCTALSDLEDAQKVCDKLGIKLHTASFSAEYWDRVFEHFLDEYRAGRTPNPDILCNKEIKFKAFLDYAQALGGDLIATGHYAQFSRFGEHTYLMKGADPSKEQSYFLHAVPGQALARTLFPVGGLLKKEVRRIARELDLITHDKKDSTGICFIGERKFSDFLKTYLPAQPGKIVTDKGEEIGRHQGLMYHTIGQRQGLGIGGLKGYDDAPWYVVEKDLDNNELVVAQGGDHPRLFSAGLTASKLDWINGVPAKSSFSCYAKTRYRQPDQLCRVDVQDGGVRVTFDKRQRAVTPGQSVVFYDGARCLGGGVIESVFK.

Residues 12–19 (GISGGVDS) and methionine 38 each bind ATP. The tract at residues 98 to 100 (NPD) is interaction with target base in tRNA. Catalysis depends on cysteine 103, which acts as the Nucleophile. The cysteines at positions 103 and 199 are disulfide-linked. Glycine 127 provides a ligand contact to ATP. The interaction with tRNA stretch occupies residues 149–151 (KEQ). Cysteine 199 functions as the Cysteine persulfide intermediate in the catalytic mechanism. An interaction with tRNA region spans residues 311–312 (RY).

The protein belongs to the MnmA/TRMU family.

It is found in the cytoplasm. It carries out the reaction S-sulfanyl-L-cysteinyl-[protein] + uridine(34) in tRNA + AH2 + ATP = 2-thiouridine(34) in tRNA + L-cysteinyl-[protein] + A + AMP + diphosphate + H(+). Catalyzes the 2-thiolation of uridine at the wobble position (U34) of tRNA, leading to the formation of s(2)U34. The chain is tRNA-specific 2-thiouridylase MnmA from Hahella chejuensis (strain KCTC 2396).